The following is an 882-amino-acid chain: Ion channel DMI1 (882 aa).

Residues 1 to 122 (MAKSNEESSN…PSSSSITKQQ (122 aa)) form a disordered region. Polar residues predominate over residues 48–62 (TSTTKTDFSEQQWNY). The span at 78–95 (PPPPPSKPPVNLIPPHPR) shows a compositional bias: pro residues. The segment covering 107 to 117 (SSLLPQPSSSS) has biased composition (low complexity). The next 4 helical transmembrane spans lie at 129-149 (SPIF…SAYL), 192-212 (TIAL…YKYL), 255-275 (LALL…LYAV), and 307-327 (IVSV…LGLV). 2 consecutive RCK N-terminal domains span residues 348–489 (RNHV…ETVV) and 608–757 (PEKI…DKSI). The stretch at 378 to 403 (VIVVLAEKEKEEMEMDIAKLEFDFMG) forms a coiled coil.

Belongs to the castor/pollux (TC 1.A.1.23) family. In terms of assembly, interacts (via c-terminus) with CNGC15A, CNGC15B and CNGC15C (via N-terminus). The Nod factor has no effect on these interactions, implying that the complex is maintained after activation. Mainly expressed in roots and nodules. Also detected in pods, flowers, leaves, and stems.

The protein localises to the nucleus membrane. Required for early signal transduction events leading to endosymbiosis. Acts early in a signal transduction chain leading from the perception of Nod factor to the activation of calcium spiking. Also involved in mycorrhizal symbiosis. May be involved in the regulation of the calcium channel responsible for calcium spiking by mobilizing another cation, and thereby altering the membrane potential. This chain is Ion channel DMI1, found in Medicago truncatula (Barrel medic).